Consider the following 298-residue polypeptide: Zinc import ATP-binding protein ZnuC (298 aa).

An ABC transporter domain is found at 17–232 (IELRNAGVYR…PEYVRLFGSR (216 aa)). 49–56 (GPNGAGKS) is an ATP binding site. Residues 273–298 (RGHCHVEDGHHHDHEHHHHEGGQPRA) form a disordered region. The segment covering 276–298 (CHVEDGHHHDHEHHHHEGGQPRA) has biased composition (basic and acidic residues).

It belongs to the ABC transporter superfamily. Zinc importer (TC 3.A.1.15.5) family. The complex is composed of two ATP-binding proteins (ZnuC), two transmembrane proteins (ZnuB) and a solute-binding protein (ZnuA).

It localises to the cell inner membrane. It carries out the reaction Zn(2+)(out) + ATP(in) + H2O(in) = Zn(2+)(in) + ADP(in) + phosphate(in) + H(+)(in). Its function is as follows. Part of the ABC transporter complex ZnuABC involved in zinc import. Responsible for energy coupling to the transport system. The sequence is that of Zinc import ATP-binding protein ZnuC from Brucella abortus (strain 2308).